The chain runs to 179 residues: Large ribosomal subunit protein uL5 (179 aa).

This sequence belongs to the universal ribosomal protein uL5 family. Part of the 50S ribosomal subunit; part of the 5S rRNA/L5/L18/L25 subcomplex. Contacts the 5S rRNA and the P site tRNA. Forms a bridge to the 30S subunit in the 70S ribosome.

This is one of the proteins that bind and probably mediate the attachment of the 5S RNA into the large ribosomal subunit, where it forms part of the central protuberance. In the 70S ribosome it contacts protein S13 of the 30S subunit (bridge B1b), connecting the 2 subunits; this bridge is implicated in subunit movement. Contacts the P site tRNA; the 5S rRNA and some of its associated proteins might help stabilize positioning of ribosome-bound tRNAs. The protein is Large ribosomal subunit protein uL5 of Rickettsia typhi (strain ATCC VR-144 / Wilmington).